The following is a 316-amino-acid chain: tRNA dimethylallyltransferase (316 aa).

Residue 19–26 (GPTASGKT) participates in ATP binding. Substrate is bound at residue 21 to 26 (TASGKT). 3 interaction with substrate tRNA regions span residues 44–47 (DSAL), 168–172 (QRITR), and 249–254 (RCVGYR).

It belongs to the IPP transferase family. Monomer. Requires Mg(2+) as cofactor.

It catalyses the reaction adenosine(37) in tRNA + dimethylallyl diphosphate = N(6)-dimethylallyladenosine(37) in tRNA + diphosphate. Its function is as follows. Catalyzes the transfer of a dimethylallyl group onto the adenine at position 37 in tRNAs that read codons beginning with uridine, leading to the formation of N6-(dimethylallyl)adenosine (i(6)A). This is tRNA dimethylallyltransferase from Colwellia psychrerythraea (strain 34H / ATCC BAA-681) (Vibrio psychroerythus).